Consider the following 350-residue polypeptide: Glyceraldehyde-3-phosphate dehydrogenase (350 aa).

NAD(+) contacts are provided by residues 10–11 (RI), Asp-36, Arg-82, and Ser-125. D-glyceraldehyde 3-phosphate contacts are provided by residues 161 to 163 (SCT), Thr-193, 222 to 223 (TG), and Arg-245. The Nucleophile role is filled by Cys-162. Asn-331 provides a ligand contact to NAD(+).

It belongs to the glyceraldehyde-3-phosphate dehydrogenase family. In terms of assembly, homotetramer.

It localises to the cytoplasm. The catalysed reaction is D-glyceraldehyde 3-phosphate + phosphate + NAD(+) = (2R)-3-phospho-glyceroyl phosphate + NADH + H(+). It participates in carbohydrate degradation; glycolysis; pyruvate from D-glyceraldehyde 3-phosphate: step 1/5. Its function is as follows. Catalyzes the oxidative phosphorylation of glyceraldehyde 3-phosphate (G3P) to 1,3-bisphosphoglycerate (BPG) using the cofactor NAD. The first reaction step involves the formation of a hemiacetal intermediate between G3P and a cysteine residue, and this hemiacetal intermediate is then oxidized to a thioester, with concomitant reduction of NAD to NADH. The reduced NADH is then exchanged with the second NAD, and the thioester is attacked by a nucleophilic inorganic phosphate to produce BPG. The protein is Glyceraldehyde-3-phosphate dehydrogenase (gap) of Treponema pallidum (strain Nichols).